Consider the following 196-residue polypeptide: Zinc finger C2H2 protein ECU03_0940 (196 aa).

C2H2-type zinc fingers lie at residues Tyr-130 to His-155 and Tyr-166 to His-191.

The polypeptide is Zinc finger C2H2 protein ECU03_0940 (Encephalitozoon cuniculi (strain GB-M1) (Microsporidian parasite)).